The primary structure comprises 144 residues: MNPSRCRIIAIGKVRKSWVQDGIELYRKRLPGLTIVELRDSNPEKEAESIRQTLRRDEWPVMLMEQGETLTSINFSERLRSLGSQRLAFVIGGADGLTAELKALAHWKLSLSPMTFPHELARLLLIEQLFRAQAILQGSPYHRA.

S-adenosyl-L-methionine contacts are provided by residues G92 and 111 to 116 (LSPMTF).

The protein belongs to the RNA methyltransferase RlmH family. Homodimer.

It is found in the cytoplasm. It carries out the reaction pseudouridine(1915) in 23S rRNA + S-adenosyl-L-methionine = N(3)-methylpseudouridine(1915) in 23S rRNA + S-adenosyl-L-homocysteine + H(+). Its function is as follows. Specifically methylates the pseudouridine at position 1915 (m3Psi1915) in 23S rRNA. The protein is Ribosomal RNA large subunit methyltransferase H of Synechococcus sp. (strain CC9311).